We begin with the raw amino-acid sequence, 437 residues long: tRNA modification GTPase MnmE (437 aa).

(6S)-5-formyl-5,6,7,8-tetrahydrofolate-binding residues include Arg-21, Glu-80, and Arg-120. The 144-residue stretch at 218–361 folds into the TrmE-type G domain; it reads GFVVVLAGPP…LLDRVAAAAG (144 aa). Asn-228 serves as a coordination point for K(+). GTP is bound by residues 228-233, 247-253, and 272-275; these read NAGKST, SPIPGTT, and DTAG. Ser-232 contributes to the Mg(2+) binding site. Positions 247, 249, and 252 each coordinate K(+). Thr-253 provides a ligand contact to Mg(2+). A (6S)-5-formyl-5,6,7,8-tetrahydrofolate-binding site is contributed by Lys-437.

Belongs to the TRAFAC class TrmE-Era-EngA-EngB-Septin-like GTPase superfamily. TrmE GTPase family. As to quaternary structure, homodimer. Heterotetramer of two MnmE and two MnmG subunits. K(+) is required as a cofactor.

The protein resides in the cytoplasm. Functionally, exhibits a very high intrinsic GTPase hydrolysis rate. Involved in the addition of a carboxymethylaminomethyl (cmnm) group at the wobble position (U34) of certain tRNAs, forming tRNA-cmnm(5)s(2)U34. This is tRNA modification GTPase MnmE from Methylobacterium sp. (strain 4-46).